Consider the following 591-residue polypeptide: Acetyltransferase spyB (591 aa).

Asn114 is a glycosylation site (N-linked (GlcNAc...) asparagine). A run of 9 helical transmembrane segments spans residues 123-143, 168-188, 199-219, 228-248, 309-329, 383-403, 453-473, 481-501, and 529-549; these read GTII…LIFL, TLLY…ILIL, LWIF…ISHG, VGVQ…INPL, SAFL…LNCA, ASIL…PLFG, IFFV…LMGI, ILFF…QAAW, and LVGF…WLCP.

Belongs to the wax synthase family.

Its subcellular location is the membrane. It catalyses the reaction sartorypyrone F + acetyl-CoA = sartorypyrone G + CoA. The enzyme catalyses sartorypyrone D + acetyl-CoA = sartorypyrone A + CoA. It participates in secondary metabolite biosynthesis; terpenoid biosynthesis. Its function is as follows. Acetyltransferase; part of the gene cluster that mediates the biosynthesis of meroterpenoids called sartorypyrones. SpyB catalyzes the last step of the pathway and is responsible for the acetylation of sartorypyrones D and F to produce sartorypyrones A and G, respectively. The biosynthesis of sartorypyrones begins with the production of triacetic acid lactone (TAL) by the NR-PKS spyA using one molecule of acetyl-CoA and two molecules of malonyl-CoA. The prenyltransferase spyF then conjugates geranylgeranyl pyrophosphate (GGPP) to TAL to form geranylgeranyl-triacetate lactone, for which the pathway-specific geranylgeranyl pyrophosphate synthase (GGPS) spyE is required to provide GGPP. Subsequently, geranylgeranyl-triacetate lactone is epoxidized at the terminal olein by the FAD-dependent monooxygenase spyC, followed by cyclization of the terpenoid component catalyzed by the terpene cyclase spyD to produce both the bicyclic sartorypyrone F and the monocyclic sartorypyrone D. Finally, the last step of the biosynthesis involves the acetylation of the meroterpenoids sartorypyrones D and F by the acetyltransferase SpyB to produce sartorypyrones A and G, respectively. The protein is Acetyltransferase spyB of Aspergillus fumigatus (strain ATCC MYA-4609 / CBS 101355 / FGSC A1100 / Af293) (Neosartorya fumigata).